The primary structure comprises 148 residues: uncharacterized protein (148 aa).

One can recognise an HTH asnC-type domain in the interval 2 to 63; sequence LDELDKRILY…LINPFKAGYE (62 aa). The segment at residues 21 to 40 is a DNA-binding region (H-T-H motif); that stretch reads YSEIARILGVPESTVRVRVK.

This is an uncharacterized protein from Pyrococcus furiosus (strain ATCC 43587 / DSM 3638 / JCM 8422 / Vc1).